A 369-amino-acid polypeptide reads, in one-letter code: Cytochrome b561 and DOMON domain-containing protein At3g07570 (369 aa).

The N-terminal stretch at 1-22 (MKLYSVSIIIFVLIALSTIVNA) is a signal peptide. In terms of domain architecture, DOMON spans 55-167 (QNFILRYART…PRQSLLYAVG (113 aa)). The Cytochrome b561 domain occupies 174-369 (SSPDFRLREH…GLEVRKFLKK (196 aa)). Residues 212–232 (THGLMNMFGWGILIIVGAIVA) traverse the membrane as a helical segment. His213 and His246 together coordinate heme b. Helical transmembrane passes span 247 to 267 (IALQ…GLVL) and 279 to 299 (HKGL…ALLA). The heme b site is built by His279 and His315. The next 2 helical transmembrane spans lie at 321–341 (LLII…KAGT) and 343–363 (WNGG…GLEV).

Heme b is required as a cofactor.

The protein localises to the membrane. In terms of biological role, may act as a catecholamine-responsive trans-membrane electron transporter. In Arabidopsis thaliana (Mouse-ear cress), this protein is Cytochrome b561 and DOMON domain-containing protein At3g07570.